A 561-amino-acid polypeptide reads, in one-letter code: MSDNRRSRMITEGPQRSPNRAMLRAVGFGDNDFTKPIVGVANGHSTLTPCNAGLGALAARAEEAIRAAGGMPQIFGTITVSDGISMGTEGMKYSLVSREVIADSIETVVNAQRMDGILAVGGCDKNMPGALIAMARLDIPAIFVYGGTIKPGHYKGRDLTIVSAFEAVGEYSAGRIDEHELLEIERHACPGAGSCGGMYTANTMSSAIEALGLSLPGSSTMAAEDEEKALSAARSGEVLVEAIRANRTARQMLTRKSLENAIAVVMALGGSTNAVLHLLAIAHAADVPLTIDDFETIRQRVPVLCDLKPSGRYVATDLHRVGGVPQVMKILLNAGLLHGDCMTITGQTIAETLADVPDEPPANQDVIRPFSQPIYPQGHLAILRGNLAEEGCVAKITGIKQRRITGPARVFDAEEECLEAILSGKIKAGDVVVIRYEGPKGGPGMREMLAPTSAIIGAGLGDSVGLITDGRFSGGTYGLVVGHVAPEAAVGGTIALVEEGDSITIDADARLLQLNVSDEELARRRAAWQPRPPRYTRGVLAKYARLVSSASLGAVTDRFSE.

Cys50 is a [2Fe-2S] cluster binding site. A Mg(2+)-binding site is contributed by Asp82. Cys123 contributes to the [2Fe-2S] cluster binding site. 2 residues coordinate Mg(2+): Asp124 and Lys125. The residue at position 125 (Lys125) is an N6-carboxylysine. Cys195 contacts [2Fe-2S] cluster. Glu447 serves as a coordination point for Mg(2+). The active-site Proton acceptor is the Ser473.

It belongs to the IlvD/Edd family. In terms of assembly, homodimer. Requires [2Fe-2S] cluster as cofactor. It depends on Mg(2+) as a cofactor.

The enzyme catalyses (2R)-2,3-dihydroxy-3-methylbutanoate = 3-methyl-2-oxobutanoate + H2O. The catalysed reaction is (2R,3R)-2,3-dihydroxy-3-methylpentanoate = (S)-3-methyl-2-oxopentanoate + H2O. It functions in the pathway amino-acid biosynthesis; L-isoleucine biosynthesis; L-isoleucine from 2-oxobutanoate: step 3/4. The protein operates within amino-acid biosynthesis; L-valine biosynthesis; L-valine from pyruvate: step 3/4. Functionally, functions in the biosynthesis of branched-chain amino acids. Catalyzes the dehydration of (2R,3R)-2,3-dihydroxy-3-methylpentanoate (2,3-dihydroxy-3-methylvalerate) into 2-oxo-3-methylpentanoate (2-oxo-3-methylvalerate) and of (2R)-2,3-dihydroxy-3-methylbutanoate (2,3-dihydroxyisovalerate) into 2-oxo-3-methylbutanoate (2-oxoisovalerate), the penultimate precursor to L-isoleucine and L-valine, respectively. In Chloroflexus aurantiacus (strain ATCC 29366 / DSM 635 / J-10-fl), this protein is Dihydroxy-acid dehydratase.